The following is a 561-amino-acid chain: Putative transport protein ASA_2308 (561 aa).

The next 5 helical transmembrane spans lie at 8–28, 37–57, 66–86, 90–110, and 161–181; these read LLHQ…LLLG, IGNT…GFEF, FMLF…SVFL, IHYI…TVGL, and NMGI…MLVV. 2 RCK C-terminal domains span residues 206-291 and 293-376; these read SDNE…NYRN and KEVF…KIGF. The next 5 helical transmembrane spans lie at 386–406, 409–429, 450–470, 476–496, and 541–561; these read LVAF…SLVF, LEFG…MGYL, LGLA…ILDH, AVVL…GYLF, and TYAV…GFWF.

This sequence belongs to the AAE transporter (TC 2.A.81) family. YbjL subfamily.

The protein resides in the cell membrane. The sequence is that of Putative transport protein ASA_2308 from Aeromonas salmonicida (strain A449).